The sequence spans 902 residues: Protein translocase subunit SecA (902 aa).

Residues Gln87, 105 to 109 (GEGKT), and Asp512 each bind ATP. Disordered regions lie at residues 565 to 584 (RRID…PGSS) and 840 to 902 (VEEQ…GKLK). 2 stretches are compositionally biased toward basic and acidic residues: residues 840–859 (VEEQ…HEDA) and 873–882 (QVREGAKVGR). Residues Cys886, Cys888, Cys897, and His898 each contribute to the Zn(2+) site. The segment covering 892 to 902 (KKYKQCHGKLK) has biased composition (basic residues).

It belongs to the SecA family. Monomer and homodimer. Part of the essential Sec protein translocation apparatus which comprises SecA, SecYEG and auxiliary proteins SecDF-YajC and YidC. It depends on Zn(2+) as a cofactor.

The protein resides in the cell inner membrane. It is found in the cytoplasm. The enzyme catalyses ATP + H2O + cellular proteinSide 1 = ADP + phosphate + cellular proteinSide 2.. Functionally, part of the Sec protein translocase complex. Interacts with the SecYEG preprotein conducting channel. Has a central role in coupling the hydrolysis of ATP to the transfer of proteins into and across the cell membrane, serving both as a receptor for the preprotein-SecB complex and as an ATP-driven molecular motor driving the stepwise translocation of polypeptide chains across the membrane. This is Protein translocase subunit SecA from Alteromonas mediterranea (strain DSM 17117 / CIP 110805 / LMG 28347 / Deep ecotype).